Consider the following 355-residue polypeptide: DNA-directed RNA polymerase subunit alpha (355 aa).

Residues 1–248 (MYYDDGIPVF…EQLQPFISSD (248 aa)) are alpha N-terminal domain (alpha-NTD). Residues 267–355 (YDPILLRKVD…ELARQHTDED (89 aa)) are alpha C-terminal domain (alpha-CTD).

Belongs to the RNA polymerase alpha chain family. Homodimer. The RNAP catalytic core consists of 2 alpha, 1 beta, 1 beta' and 1 omega subunit. When a sigma factor is associated with the core the holoenzyme is formed, which can initiate transcription.

It carries out the reaction RNA(n) + a ribonucleoside 5'-triphosphate = RNA(n+1) + diphosphate. Functionally, DNA-dependent RNA polymerase catalyzes the transcription of DNA into RNA using the four ribonucleoside triphosphates as substrates. The protein is DNA-directed RNA polymerase subunit alpha of Wolbachia sp. subsp. Brugia malayi (strain TRS).